The following is a 69-amino-acid chain: Probable rubredoxin HupI (69 aa).

Residues 16–67 (VTRLECGICWTVYDPADGDDVAQIAPGTPFAALPEEWHCPNCDAPKSKFMAI) enclose the Rubredoxin-like domain. Positions 21, 24, 54, and 57 each coordinate Fe cation.

This sequence belongs to the rubredoxin family. The cofactor is Fe(3+).

In terms of biological role, could be an electron transport intermediate in hydrogen oxidation. This is Probable rubredoxin HupI (hupI) from Bradyrhizobium diazoefficiens (strain JCM 10833 / BCRC 13528 / IAM 13628 / NBRC 14792 / USDA 110).